Here is a 1098-residue protein sequence, read N- to C-terminus: WD repeat-containing protein 72 (1098 aa).

WD repeat units lie at residues 15 to 54 (APPH…KISA), 60 to 102 (GHSA…CVEK), 158 to 196 (WINC…NSIQ), 315 to 359 (ENKN…VSKF), 399 to 438 (AGTA…KARL), 456 to 501 (GHHQ…ILHK), 504 to 549 (LEAG…CLLR), and 552 to 591 (KHLF…LERH). Phosphoserine occurs at positions 1077 and 1079.

It is found in the cytoplasmic vesicle. Functionally, plays a major role in formation of tooth enamel. Specifically required during the maturation phase of amelogenesis for normal formation of the enamel matrix and clearance of enamel proteins. May be involved in localization of the calcium transporter SLC24A4 to the ameloblast cell membrane. This Pongo abelii (Sumatran orangutan) protein is WD repeat-containing protein 72 (WDR72).